We begin with the raw amino-acid sequence, 430 residues long: MLLTLYTCLLWLSTSGLWTIQAKGTDTDVSTRNPHRDLAPNNVDFAFTLYKHLVASAPGKNVFISPVSISMALAMLSLGARGYTREQLLQGLGFSLVEMSEAEIHQAFRHLHHLLRESNTTLEMTMGNALFLDHSLELLESFSADTKHYYELEALTTDFQDWAGASRQINEYIKNKTQGKIVDLFSESDSSAMFILVNYIFFKGMWVHSFDLESTREENFYVNEATTVWVPMMFQSNTIKYLNDSVLPCQLVQLDYTGNETVFFVLPVKGKMDSVITALSRDTIQRWSKSLTMSQVDLYIPKISISGAYDLGGIMGDMGIADLLSNRTHFSGITQEALPKVSKVVHKAALQVDEKGLEAAAPTRVSVTAAPGPLTLRFNRPFIIMIFDDFTWSSLFLGKVVNPTEGALPGAKLRLTRAPRAHRKGWEGSP.

The signal sequence occupies residues 1 to 22; that stretch reads MLLTLYTCLLWLSTSGLWTIQA. N-linked (GlcNAc...) asparagine glycans are attached at residues Asn119, Asn175, and Asn243. A cortisol-binding site is contributed by Gln253. N-linked (GlcNAc...) asparagine glycosylation is present at Asn259. Cortisol is bound at residue Gln285. Residue Asn326 is glycosylated (N-linked (GlcNAc...) asparagine). Trp392 contacts cortisol.

It belongs to the serpin family. As to expression, expressed by the liver; secreted in plasma.

It is found in the secreted. Functionally, major transport protein for glucocorticoids and progestins in the blood of almost all vertebrate species. The protein is Corticosteroid-binding globulin (SERPINA6) of Ovis aries (Sheep).